Reading from the N-terminus, the 265-residue chain is (-)-isopiperitenol/(-)-carveol dehydrogenase, mitochondrial (265 aa).

A mitochondrion-targeting transit peptide spans 1-30 (MASVKKLAGKVAIVTGGASGIGEVTARLFA). Residue 13-38 (IVTGGASGIGEVTARLFAERGARAVV) participates in NAD(+) binding. Ser147 serves as a coordination point for substrate. Tyr160 serves as the catalytic Proton acceptor.

Belongs to the short-chain dehydrogenases/reductases (SDR) family. As to quaternary structure, homodimer and homotetramer. In terms of tissue distribution, peltate glandular trichomes.

The protein resides in the mitochondrion. The enzyme catalyses (1S,6R)-isopiperitenol + NAD(+) = (6R)-isopiperitenone + NADH + H(+). It catalyses the reaction (1S,5R)-carveol + NADP(+) = (R)-carvone + NADPH + H(+). In terms of biological role, involved in the biosynthesis of menthol and related monoterpenes in leaves. Can use (-)-trans-carveol and, with a lower relative velocity, (-)-trans-isopiperitenol, (+)-neomenthol, (+)-neoisomenthol and (-)-cis-isopiperitenol as substrates, but not (-)-cis-carvenol, (-)-menthol, (+)-isomenthol, 7-hydroxy-limonene, (-)-isopiperitenone or (-)-carvone. The polypeptide is (-)-isopiperitenol/(-)-carveol dehydrogenase, mitochondrial (Mentha piperita (Peppermint)).